Here is a 395-residue protein sequence, read N- to C-terminus: Elongation factor Tu (395 aa).

The region spanning 10-204 is the tr-type G domain; the sequence is KTHANIGTIG…AVDSYIPTPE (195 aa). A G1 region spans residues 19-26; sequence GHVDHGKT. 19–26 lines the GTP pocket; it reads GHVDHGKT. T26 is a Mg(2+) binding site. Residues 60–64 are G2; that stretch reads GITIN. The segment at 81–84 is G3; sequence DCPG. GTP is bound by residues 81 to 85 and 136 to 139; these read DCPGH and NKCD. The tract at residues 136–139 is G4; the sequence is NKCD. Positions 174–176 are G5; the sequence is SAL.

It belongs to the TRAFAC class translation factor GTPase superfamily. Classic translation factor GTPase family. EF-Tu/EF-1A subfamily. As to quaternary structure, monomer.

It localises to the cytoplasm. It carries out the reaction GTP + H2O = GDP + phosphate + H(+). Functionally, GTP hydrolase that promotes the GTP-dependent binding of aminoacyl-tRNA to the A-site of ribosomes during protein biosynthesis. This chain is Elongation factor Tu, found in Lysinibacillus sphaericus (strain C3-41).